Consider the following 71-residue polypeptide: Long neurotoxin 2 (71 aa).

Cystine bridges form between C3/C20, C14/C41, C26/C30, C45/C56, and C57/C62.

Belongs to the three-finger toxin family. Long-chain subfamily. Type II alpha-neurotoxin sub-subfamily. Expressed by the venom gland.

The protein localises to the secreted. Binds with high affinity to muscular (alpha-1/CHRNA1) and neuronal (alpha-7/CHRNA7) nicotinic acetylcholine receptor (nAChR) and inhibits acetylcholine from binding to the receptor, thereby impairing neuromuscular and neuronal transmission. This Naja naja (Indian cobra) protein is Long neurotoxin 2.